Consider the following 257-residue polypeptide: Acetylglutamate kinase (257 aa).

Substrate contacts are provided by residues 43–44, Arg-65, and Asn-157; that span reads GG. ATP is bound by residues 180–185 and 208–210; these read DVSGIL and IIT.

The protein belongs to the acetylglutamate kinase family. ArgB subfamily. In terms of assembly, homodimer.

The protein localises to the cytoplasm. The catalysed reaction is N-acetyl-L-glutamate + ATP = N-acetyl-L-glutamyl 5-phosphate + ADP. It functions in the pathway amino-acid biosynthesis; L-arginine biosynthesis; N(2)-acetyl-L-ornithine from L-glutamate: step 2/4. Its function is as follows. Catalyzes the ATP-dependent phosphorylation of N-acetyl-L-glutamate. The sequence is that of Acetylglutamate kinase from Proteus mirabilis (strain HI4320).